The following is a 215-amino-acid chain: Adenylate kinase (215 aa).

Residue 10-15 (GAGKGT) participates in ATP binding. Residues 30 to 59 (STGDLLRAAVAAGTPLGKEAKAYMDRGELV) are NMP. Residues Thr-31, Arg-36, 57 to 59 (ELV), 85 to 88 (GFPR), and Gln-92 contribute to the AMP site. The tract at residues 126–163 (GRRTCKSCGQMYNVYYSPSKVEGKCDKCGGELFQRDDD) is LID. ATP is bound at residue Arg-127. 4 residues coordinate Zn(2+): Cys-130, Cys-133, Cys-150, and Cys-153. Arg-160 and Arg-171 together coordinate AMP. Gly-199 is an ATP binding site.

Belongs to the adenylate kinase family. As to quaternary structure, monomer.

Its subcellular location is the cytoplasm. It carries out the reaction AMP + ATP = 2 ADP. Its pathway is purine metabolism; AMP biosynthesis via salvage pathway; AMP from ADP: step 1/1. In terms of biological role, catalyzes the reversible transfer of the terminal phosphate group between ATP and AMP. Plays an important role in cellular energy homeostasis and in adenine nucleotide metabolism. This is Adenylate kinase from Thermodesulfovibrio yellowstonii (strain ATCC 51303 / DSM 11347 / YP87).